Here is a 262-residue protein sequence, read N- to C-terminus: Small ribosomal subunit protein uS2 (262 aa).

Residues 228–262 are disordered; sequence VSNEEVAAEQNIDLDESKEATEAETTEENTSVESN.

It belongs to the universal ribosomal protein uS2 family.

The sequence is that of Small ribosomal subunit protein uS2 from Staphylococcus saprophyticus subsp. saprophyticus (strain ATCC 15305 / DSM 20229 / NCIMB 8711 / NCTC 7292 / S-41).